The following is a 533-amino-acid chain: MSLSYLSSSSQKSFESFRQEESPACNHSYQRDYETFGDSKHTSFSSFAPFENEVSLNQAVIPSPPSHLQNFQDQFDYSSVLKTPFNPLLEANSAYFLSNQISLPDSHSYASSFDASLSPPSSPLTCVSQIHTEQNFNNNDAFSLTNSQQAFSEIGYDASNWIDELDSQQQVLSFPEFDIPEIKTETCSNKDHLENFDYLSSSIPETSGPASSVLPSSSQLESFNEFMFLPSSPPGLDEINGAPSFEELNFQISQPSPAHPVDLSSPETAPNISPVSPFAQLVKLEPTSPQKPSFALDSSFSHLDVCRHTDNQKAFAKLSSPAEYVSEFEKFSSVCDHGLDISNANINNTLTQQFALSAPYESCIVTKKPEPCITVKEEEQLAPKIESADLSITPQVTEHDSKPPVRISYDHRCKTRKQSTRICRIPPETMASLYCGPEADGKYVCLYNGCNKRIARKYNVESHIQTHLSDRPYRCDLCKAGFVRHHDLKRHLRIHENGRPYVCECLKRFNRLDALNRHKQRNICVGGVDRRQH.

C2H2-type zinc fingers lie at residues 443–472 and 473–500; these read YVCLYNGCNKRIARKYNVESHIQTHLSDRP and YRCDLCKAGFVRHHDLKRHLRIHENGRP. The C2H2-type 3; atypical zinc-finger motif lies at 501–524; that stretch reads YVCECLKRFNRLDALNRHKQRNIC.

The protein resides in the nucleus. Functionally, regulates the transcription of genes required for cell separation. The polypeptide is Metallothionein expression activator (ace2) (Schizosaccharomyces pombe (strain 972 / ATCC 24843) (Fission yeast)).